The primary structure comprises 284 residues: MEMO1 family protein MmarC5_0191 (284 aa).

It belongs to the MEMO1 family.

In Methanococcus maripaludis (strain C5 / ATCC BAA-1333), this protein is MEMO1 family protein MmarC5_0191.